The following is a 474-amino-acid chain: Poly(A) polymerase catalytic subunit (474 aa).

Active-site residues include Asp-193 and Asp-195.

Belongs to the poxviridae poly(A) polymerase catalytic subunit family. Heterodimer of a large (catalytic) subunit and a small (regulatory) subunit.

The enzyme catalyses RNA(n) + ATP = RNA(n)-3'-adenine ribonucleotide + diphosphate. Functionally, polymerase that creates the 3'-poly(A) tail of mRNA's. The protein is Poly(A) polymerase catalytic subunit (PAPL) of Bos taurus (Bovine).